The primary structure comprises 644 residues: ATP-dependent zinc metalloprotease FtsH (644 aa).

The Cytoplasmic segment spans residues 1–4; the sequence is MAKN. Residues 5-25 traverse the membrane as a helical segment; the sequence is LILWLVIAVVLMSVFQSFGPS. Topologically, residues 26 to 98 are periplasmic; that stretch reads ESNGRKVDYS…VGEPPEEPSL (73 aa). The helical transmembrane segment at 99–119 threads the bilayer; it reads LASIFISWFPMLLLIGVWIFF. The Cytoplasmic segment spans residues 120-644; the sequence is MRQMQGGGGK…NTMSEQLGDK (525 aa). An ATP-binding site is contributed by 192–199; sequence GPPGTGKT. Residue His-414 participates in Zn(2+) binding. Residue Glu-415 is part of the active site. Positions 418 and 492 each coordinate Zn(2+). Positions 598 to 644 are disordered; it reads VRPPAGWEEPGASNNSGDNGSPKAPRPVDEPRTPNPGNTMSEQLGDK. The segment covering 632-644 has biased composition (polar residues); that stretch reads NPGNTMSEQLGDK.

It in the central section; belongs to the AAA ATPase family. This sequence in the C-terminal section; belongs to the peptidase M41 family. Homohexamer. Zn(2+) serves as cofactor.

The protein localises to the cell inner membrane. Acts as a processive, ATP-dependent zinc metallopeptidase for both cytoplasmic and membrane proteins. Plays a role in the quality control of integral membrane proteins. This is ATP-dependent zinc metalloprotease FtsH from Shigella flexneri.